The primary structure comprises 340 residues: MDHAADRHRTDLMTITRFVLNEQTKHPESRGDFSILLSHIVLGCKFVCTAVNKAGLAKLLGLAGETNVQGEDQKKLDVLSNEVFIKALVSSNRTCILVSEEDEEATFVRPANRGKYCVVFDPLDGSSNIDCGVSIGTIFGIYMIKDGHEPTLDDVLQPGMNMLAAGYCMYGSSCTLVLSTGSGVNGFTLDPSLGEFILTHPDIKIPKKGKIYSVNEGNAKNWDSPTSKYVQSCKYPADGSSPKSLRYIGSMVADVHRTLLYGGIFLYPGDKKSPNGKLRVLYEVFPMSFLMEQAGGQAFTGKQRALDLVPEKIHERSPIFLGSYDDVEEIKKLYAAEEQN.

Mg(2+) is bound by residues Glu71, Glu100, Asp121, Leu123, and Asp124. Substrate-binding positions include 124–127, Asn215, Tyr247, Tyr267, and Lys277; that span reads DGSS. A Mg(2+)-binding site is contributed by Glu283.

Belongs to the FBPase class 1 family. The cofactor is Mg(2+).

Its subcellular location is the cytoplasm. The enzyme catalyses beta-D-fructose 1,6-bisphosphate + H2O = beta-D-fructose 6-phosphate + phosphate. The sequence is that of Fructose-1,6-bisphosphatase, cytosolic from Solanum tuberosum (Potato).